The primary structure comprises 272 residues: L-aspartate dehydrogenase (272 aa).

Residues Ala-125 and Asn-192 each coordinate NAD(+). The active site involves His-222.

It belongs to the L-aspartate dehydrogenase family.

It carries out the reaction L-aspartate + NADP(+) + H2O = oxaloacetate + NH4(+) + NADPH + H(+). It catalyses the reaction L-aspartate + NAD(+) + H2O = oxaloacetate + NH4(+) + NADH + H(+). It functions in the pathway cofactor biosynthesis; NAD(+) biosynthesis; iminoaspartate from L-aspartate (dehydrogenase route): step 1/1. In terms of biological role, specifically catalyzes the NAD or NADP-dependent dehydrogenation of L-aspartate to iminoaspartate. The sequence is that of L-aspartate dehydrogenase from Nitrosopumilus maritimus (strain SCM1).